We begin with the raw amino-acid sequence, 146 residues long: Hemoglobin subunit beta (146 aa).

V1 bears the N-acetylvaline mark. The Globin domain occupies 2–146 (HLTGEEKAAV…VANALAHKYH (145 aa)). Position 12 is a phosphothreonine (T12). S44 carries the post-translational modification Phosphoserine. Position 59 is an N6-acetyllysine (K59). H63 contributes to the heme b binding site. Position 82 is an N6-acetyllysine (K82). H92 contacts heme b. Residue C93 is modified to S-nitrosocysteine. K144 is subject to N6-acetyllysine.

The protein belongs to the globin family. As to quaternary structure, heterotetramer of two alpha chains and two beta chains. As to expression, red blood cells.

In terms of biological role, involved in oxygen transport from the lung to the various peripheral tissues. The polypeptide is Hemoglobin subunit beta (HBB) (Mustela putorius furo (European domestic ferret)).